The primary structure comprises 612 residues: ETS-related transcription factor Elf-1 (612 aa).

Ser-110, Ser-163, Ser-167, and Ser-168 each carry phosphoserine. The segment covering 156 to 169 has biased composition (polar residues); that stretch reads VQETNADSPGASSP. A disordered region spans residues 156–199; the sequence is VQETNADSPGASSPEQRKRKKGRKTKPPRPDSPTTTPNISVKKK. Over residues 172-182 the composition is skewed to basic residues; sequence RKRKKGRKTKP. At Ser-187 the chain carries Phosphoserine. Phosphothreonine is present on Thr-190. Residues 208 to 290 constitute a DNA-binding region (ETS); the sequence is IYLWEFLLAL…EGQRLVYQFK (83 aa). The disordered stretch occupies residues 300-361; it reads DDEDPSSSIE…AANPKDPVEV (62 aa). Over residues 305–322 the composition is skewed to low complexity; it reads SSSIESSDQSLSSTTASS. Residues 323 to 335 are compositionally biased toward polar residues; it reads RNQANRSRVSSSP. Residue Ser-431 is modified to Phosphoserine. A compositionally biased stretch (basic and acidic residues) spans 562–577; it reads EVEKKAEDDLNEDAEK. The tract at residues 562-586 is disordered; it reads EVEKKAEDDLNEDAEKSAQQPQPYV.

Belongs to the ETS family. In terms of assembly, binds to the underphosphorylated form of RB. May interact with other transcription factors in order to regulate specific genes. Interacts with RUNX1. Interacts with SP1; the interaction is inhibited by glycosylation of SP1. In terms of tissue distribution, predominantly found in hematopoietic cells. Detected in other cell types such as fibroblasts.

The protein localises to the nucleus. Its function is as follows. Transcription factor that activates the LYN and BLK promoters. This Mus musculus (Mouse) protein is ETS-related transcription factor Elf-1 (Elf1).